A 207-amino-acid polypeptide reads, in one-letter code: Histidine biosynthesis bifunctional protein HisIE (207 aa).

The interval 1–115 (MLSKKENLLK…FFLKENTLNF (115 aa)) is phosphoribosyl-AMP cyclohydrolase. A phosphoribosyl-ATP pyrophosphohydrolase region spans residues 116 to 207 (LSKLEDLIED…NLKKRKTEKL (92 aa)).

This sequence in the N-terminal section; belongs to the PRA-CH family. In the C-terminal section; belongs to the PRA-PH family.

The protein localises to the cytoplasm. It catalyses the reaction 1-(5-phospho-beta-D-ribosyl)-ATP + H2O = 1-(5-phospho-beta-D-ribosyl)-5'-AMP + diphosphate + H(+). The catalysed reaction is 1-(5-phospho-beta-D-ribosyl)-5'-AMP + H2O = 1-(5-phospho-beta-D-ribosyl)-5-[(5-phospho-beta-D-ribosylamino)methylideneamino]imidazole-4-carboxamide. The protein operates within amino-acid biosynthesis; L-histidine biosynthesis; L-histidine from 5-phospho-alpha-D-ribose 1-diphosphate: step 2/9. Its pathway is amino-acid biosynthesis; L-histidine biosynthesis; L-histidine from 5-phospho-alpha-D-ribose 1-diphosphate: step 3/9. The chain is Histidine biosynthesis bifunctional protein HisIE (hisI) from Buchnera aphidicola subsp. Schizaphis graminum (strain Sg).